We begin with the raw amino-acid sequence, 272 residues long: MQILKDQENLNPDGGSFVLITPPLSPPKQKSLSYTNISRRHGMRACMKGIVYEVYKNQPKLWLQQELIWLRRKRIHPIPKARRNNHVGRWANRHSNVSSSSGSRGRSSVSSRDSSPSYSGALRSAERSISSSPSTIEARRRKSARGNGLNGAIDVANLPFEELPNFCPDMSVLDNRTHPRTLKAEWKGPPLDLSDDPYRDLLHPAELHLASTLRLPCLIYLDNKKRIFAEWHHRRQQGLTFRKTDAQRASRVDVNKASRLWKAFHEVGFFDD.

Residues 86–148 form a disordered region; that stretch reads HVGRWANRHS…RRRKSARGNG (63 aa). Composition is skewed to low complexity over residues 95–120 and 127–136; these read SNVSSSSGSRGRSSVSSRDSSPSYSG and RSISSSPSTI. Ser-130 and Ser-132 each carry phosphoserine. A Phosphothreonine modification is found at Thr-135. The region spanning 182–272 is the SWIRM domain; it reads LKAEWKGPPL…AFHEVGFFDD (91 aa).

In terms of assembly, component of the RPD3C(L) complex.

It is found in the nucleus. Functionally, component of the RPD3C(L) histone deacetylase complex (HDAC) responsible for the deacetylation of lysine residues on the N-terminal part of the core histones (H2A, H2B, H3 and H4). Histone deacetylation gives a tag for epigenetic repression and plays an important role in transcriptional regulation, cell cycle progression and developmental events. The polypeptide is SWIRM domain-containing protein laf2 (laf2) (Schizosaccharomyces pombe (strain 972 / ATCC 24843) (Fission yeast)).